The following is a 370-amino-acid chain: 3-isopropylmalate dehydrogenase 2 (370 aa).

Residue 77–90 coordinates NAD(+); that stretch reads GPKWDAVPYEVRPE. Substrate contacts are provided by R97, R107, R135, and D226. 3 residues coordinate Mg(2+): D226, D250, and D254. 290-302 serves as a coordination point for NAD(+); that stretch reads GSAPDIAGKGLAN.

This sequence belongs to the isocitrate and isopropylmalate dehydrogenases family. LeuB type 1 subfamily. As to quaternary structure, homodimer. Mg(2+) serves as cofactor. Requires Mn(2+) as cofactor.

The protein resides in the cytoplasm. The enzyme catalyses (2R,3S)-3-isopropylmalate + NAD(+) = 4-methyl-2-oxopentanoate + CO2 + NADH. The protein operates within amino-acid biosynthesis; L-leucine biosynthesis; L-leucine from 3-methyl-2-oxobutanoate: step 3/4. Functionally, catalyzes the oxidation of 3-carboxy-2-hydroxy-4-methylpentanoate (3-isopropylmalate) to 3-carboxy-4-methyl-2-oxopentanoate. The product decarboxylates to 4-methyl-2 oxopentanoate. This Bradyrhizobium diazoefficiens (strain JCM 10833 / BCRC 13528 / IAM 13628 / NBRC 14792 / USDA 110) protein is 3-isopropylmalate dehydrogenase 2.